The following is an 86-amino-acid chain: Small ribosomal subunit protein bS16 (86 aa).

This sequence belongs to the bacterial ribosomal protein bS16 family.

In Legionella pneumophila (strain Paris), this protein is Small ribosomal subunit protein bS16.